The primary structure comprises 170 residues: Methanogen homoaconitase small subunit (170 aa).

The YLRT motif lies at 26–29 (YLRT).

It belongs to the LeuD family. LeuD type 2 subfamily. In terms of assembly, heterotetramer of 2 HacA and 2 HacB proteins.

It catalyses the reaction (2R)-homocitrate = (2R,3S)-homoisocitrate. It carries out the reaction (2R)-homocitrate = cis-homoaconitate + H2O. The catalysed reaction is (2R,3S)-homoisocitrate = cis-homoaconitate + H2O. The enzyme catalyses cis-(homo)2aconitate + H2O = (2R,3S)-iso(homo)2citrate. It catalyses the reaction cis-(homo)3aconitate + H2O = (2R,3S)-iso(homo)3citrate. Its pathway is organic acid metabolism; 2-oxosuberate biosynthesis. In terms of biological role, component of a hydro-lyase with broad substrate specificity for cis-unsaturated tricarboxylic acids. Catalyzes both the reversible dehydration of (R)-homocitrate ((R)-2-hydroxybutane-1,2,4-tricarboxylate) to produce cis-homoaconitate ((Z)-but-1-ene-1,2,4-tricarboxylate), and its hydration to homoisocitrate ((1R,2S)-1-hydroxybutane-1,2,4-tricarboxylate). Is also able to hydrate the analogous longer chain substrates cis-homo(2)-aconitate, cis-homo(3)-aconitate. These reactions are part of the biosynthesis pathway of coenzyme B. The polypeptide is Methanogen homoaconitase small subunit (hacB) (Methanothermobacter thermautotrophicus (strain ATCC 29096 / DSM 1053 / JCM 10044 / NBRC 100330 / Delta H) (Methanobacterium thermoautotrophicum)).